Consider the following 205-residue polypeptide: Large ribosomal subunit protein bL25 (205 aa).

Positions 178-205 (FPETEPVEDEESAGEDAQGESEEKAAKE) are disordered. Over residues 182–197 (EPVEDEESAGEDAQGE) the composition is skewed to acidic residues.

This sequence belongs to the bacterial ribosomal protein bL25 family. CTC subfamily. As to quaternary structure, part of the 50S ribosomal subunit; part of the 5S rRNA/L5/L18/L25 subcomplex. Contacts the 5S rRNA. Binds to the 5S rRNA independently of L5 and L18.

This is one of the proteins that binds to the 5S RNA in the ribosome where it forms part of the central protuberance. The sequence is that of Large ribosomal subunit protein bL25 from Cutibacterium acnes (strain DSM 16379 / KPA171202) (Propionibacterium acnes).